The primary structure comprises 340 residues: Phosphate acyltransferase (340 aa).

This sequence belongs to the PlsX family. Homodimer. Probably interacts with PlsY.

It localises to the cytoplasm. It carries out the reaction a fatty acyl-[ACP] + phosphate = an acyl phosphate + holo-[ACP]. The protein operates within lipid metabolism; phospholipid metabolism. Its function is as follows. Catalyzes the reversible formation of acyl-phosphate (acyl-PO(4)) from acyl-[acyl-carrier-protein] (acyl-ACP). This enzyme utilizes acyl-ACP as fatty acyl donor, but not acyl-CoA. The polypeptide is Phosphate acyltransferase (Helicobacter pylori (strain HPAG1)).